The primary structure comprises 76 residues: Vasotab (76 aa).

The signal sequence occupies residues 1–20 (MKFALFSVLVVLLIATFVAA). The 56-residue stretch at 21 to 76 (DECPRICTADYRPVCGTPSGGRRSANRTFGNQCSLNAHNCLNKGDTYDKLHDGECK) folds into the Kazal-like domain. Cystine bridges form between Cys-23–Cys-60, Cys-27–Cys-53, and Cys-35–Cys-75.

In terms of tissue distribution, expressed by the salivary gland.

It is found in the secreted. In terms of biological role, vasodilator protein that inhibits vasoconstriction of isolated rat femoral artery induced by phenylephrine. Since platelet aggregation and vasoconstriction are key hemostatic responses, particularly in small wounds, this protein likely participates in the antihemostatic responses during blood feeding. Blocks L-type calcium channels (Cav1/CACNA1) in left ventricular myocytes isolated from rat hearts. In Hybomitra bimaculata (Horse fly), this protein is Vasotab.